The following is a 345-amino-acid chain: Putative mediator of RNA polymerase II transcription subunit 7 (345 aa).

Low complexity-rich tracts occupy residues 1 to 27 and 88 to 126; these read MNTS…TPQQ and NNNN…NNNN. Disordered stretches follow at residues 1–130 and 292–315; these read MNTS…KATT and TPLP…NNSQ.

This sequence belongs to the Mediator complex subunit 7 family. In terms of assembly, component of the Mediator complex.

Its subcellular location is the nucleus. Component of the Mediator complex, a coactivator involved in the regulated transcription of nearly all RNA polymerase II-dependent genes. Mediator functions as a bridge to convey information from gene-specific regulatory proteins to the basal RNA polymerase II transcription machinery. Mediator is recruited to promoters by direct interactions with regulatory proteins and serves as a scaffold for the assembly of a functional preinitiation complex with RNA polymerase II and the general transcription factors. This chain is Putative mediator of RNA polymerase II transcription subunit 7 (med7), found in Dictyostelium discoideum (Social amoeba).